The sequence spans 85 residues: RNA-binding protein Hfq (85 aa).

Residues 10–70 (DAFLNQVRKE…ISTIIPQRPV (61 aa)) form the Sm domain.

Belongs to the Hfq family. Homohexamer.

Functionally, RNA chaperone that binds small regulatory RNA (sRNAs) and mRNAs to facilitate mRNA translational regulation in response to envelope stress, environmental stress and changes in metabolite concentrations. Also binds with high specificity to tRNAs. This Carboxydothermus hydrogenoformans (strain ATCC BAA-161 / DSM 6008 / Z-2901) protein is RNA-binding protein Hfq.